Here is a 633-residue protein sequence, read N- to C-terminus: DNA mismatch repair protein MutL (633 aa).

Belongs to the DNA mismatch repair MutL/HexB family.

Functionally, this protein is involved in the repair of mismatches in DNA. It is required for dam-dependent methyl-directed DNA mismatch repair. May act as a 'molecular matchmaker', a protein that promotes the formation of a stable complex between two or more DNA-binding proteins in an ATP-dependent manner without itself being part of a final effector complex. The protein is DNA mismatch repair protein MutL of Pseudomonas putida (strain W619).